Consider the following 261-residue polypeptide: 5'-nucleotidase SurE (261 aa).

4 residues coordinate a divalent metal cation: D12, D13, S43, and N99.

The protein belongs to the SurE nucleotidase family. A divalent metal cation serves as cofactor.

The protein resides in the cytoplasm. It carries out the reaction a ribonucleoside 5'-phosphate + H2O = a ribonucleoside + phosphate. Nucleotidase that shows phosphatase activity on nucleoside 5'-monophosphates. The sequence is that of 5'-nucleotidase SurE from Polynucleobacter asymbioticus (strain DSM 18221 / CIP 109841 / QLW-P1DMWA-1) (Polynucleobacter necessarius subsp. asymbioticus).